The following is a 79-amino-acid chain: Putative membrane protein insertion efficiency factor (79 aa).

The protein belongs to the UPF0161 family.

Its subcellular location is the cell inner membrane. In terms of biological role, could be involved in insertion of integral membrane proteins into the membrane. The chain is Putative membrane protein insertion efficiency factor from Prochlorococcus marinus (strain NATL1A).